We begin with the raw amino-acid sequence, 98 residues long: snRNA-activating protein complex subunit 5 (98 aa).

The interval 75–98 (ALELSTRSHVQEEEEEEEEEEEDS) is disordered. A compositionally biased stretch (acidic residues) spans 86 to 98 (EEEEEEEEEEEDS).

As to quaternary structure, part of the SNAPc complex composed of 5 subunits: SNAPC1, SNAPC2, SNAPC3, SNAPC4 and SNAPC5. SNAPC5 interacts with SNAPC4.

The protein localises to the nucleus. Its function is as follows. Part of the SNAPc complex required for the transcription of both RNA polymerase II and III small-nuclear RNA genes. Binds to the proximal sequence element (PSE), a non-TATA-box basal promoter element common to these 2 types of genes. Recruits TBP and BRF2 to the U6 snRNA TATA box. In Bos taurus (Bovine), this protein is snRNA-activating protein complex subunit 5 (SNAPC5).